The chain runs to 303 residues: ATP synthase gamma chain (303 aa).

It belongs to the ATPase gamma chain family. As to quaternary structure, F-type ATPases have 2 components, CF(1) - the catalytic core - and CF(0) - the membrane proton channel. CF(1) has five subunits: alpha(3), beta(3), gamma(1), delta(1), epsilon(1). CF(0) has three main subunits: a, b and c.

The protein resides in the cell inner membrane. Functionally, produces ATP from ADP in the presence of a proton gradient across the membrane. The gamma chain is believed to be important in regulating ATPase activity and the flow of protons through the CF(0) complex. The chain is ATP synthase gamma chain from Elusimicrobium minutum (strain Pei191).